The chain runs to 475 residues: MSPQTETKAGAGFKAGVKDYRLTYYTPEYETKETDILAAFRMTPQPGVPPEEAGAAVAAESSTGTWTTVWTDGLTSLDRYKGRCYDIEPVAGEENQYIAYVAYPLDLFEEGSVTNLFTSIVGNVFGFKALRALRLEDLRIPPAYSKTFQGPPHGYQVERDKINKYGRPLLGCTIKPKLGLSAKNYGRAVYECLRGGLDFTKDDENVNSQPFMRWRDRFLFVAEAIYKAQAETGEIKGHYLNATAGTCEEMMKRAEYAKELGVPIIMHDYLTGGFTANTSLAHYCRDNGLLLHIHRAMQAVIDRQKNHGIHFRVLAKALRMSGGDHIHSGTVVGKLEGERQVTLGFVDLLRDDYIEKDRSRGIYFTQDWVSMPGVLPVASGGIHVWHMPALTEIFGDDSVLQFGGGTLGHPWGNAPGRVANRVALEACVQARNEGRDLAREGNEVIREACKWSPELAAACEVWKEIKFEFDTIDTL.

Residues 1–2 (MS) constitute a propeptide that is removed on maturation. An N-acetylproline modification is found at Pro3. Position 14 is an N6,N6,N6-trimethyllysine (Lys14). Residues Asn123 and Thr173 each contribute to the substrate site. Lys175 functions as the Proton acceptor in the catalytic mechanism. Residue Lys177 coordinates substrate. Mg(2+)-binding residues include Lys201, Asp203, and Glu204. Lys201 is modified (N6-carboxylysine). The active-site Proton acceptor is the His294. Substrate is bound by residues Arg295, His327, and Ser379.

It belongs to the RuBisCO large chain family. Type I subfamily. Heterohexadecamer of 8 large chains and 8 small chains; disulfide-linked. The disulfide link is formed within the large subunit homodimers. Mg(2+) is required as a cofactor. In terms of processing, the disulfide bond which can form in the large chain dimeric partners within the hexadecamer appears to be associated with oxidative stress and protein turnover.

Its subcellular location is the plastid. The protein resides in the chloroplast. The catalysed reaction is 2 (2R)-3-phosphoglycerate + 2 H(+) = D-ribulose 1,5-bisphosphate + CO2 + H2O. It catalyses the reaction D-ribulose 1,5-bisphosphate + O2 = 2-phosphoglycolate + (2R)-3-phosphoglycerate + 2 H(+). Its function is as follows. RuBisCO catalyzes two reactions: the carboxylation of D-ribulose 1,5-bisphosphate, the primary event in carbon dioxide fixation, as well as the oxidative fragmentation of the pentose substrate in the photorespiration process. Both reactions occur simultaneously and in competition at the same active site. The protein is Ribulose bisphosphate carboxylase large chain of Spirogyra maxima (Green alga).